A 122-amino-acid chain; its full sequence is Large ribosomal subunit protein uL14 (122 aa).

Belongs to the universal ribosomal protein uL14 family. As to quaternary structure, part of the 50S ribosomal subunit. Forms a cluster with proteins L3 and L19. In the 70S ribosome, L14 and L19 interact and together make contacts with the 16S rRNA in bridges B5 and B8.

In terms of biological role, binds to 23S rRNA. Forms part of two intersubunit bridges in the 70S ribosome. This Endomicrobium trichonymphae protein is Large ribosomal subunit protein uL14.